The primary structure comprises 334 residues: Ferredoxin--NADP reductase (334 aa).

Asp33, Gln41, Tyr46, Ala86, Phe120, Asp286, and Thr327 together coordinate FAD.

Belongs to the ferredoxin--NADP reductase type 2 family. In terms of assembly, homodimer. It depends on FAD as a cofactor.

It carries out the reaction 2 reduced [2Fe-2S]-[ferredoxin] + NADP(+) + H(+) = 2 oxidized [2Fe-2S]-[ferredoxin] + NADPH. This Rickettsia typhi (strain ATCC VR-144 / Wilmington) protein is Ferredoxin--NADP reductase.